The following is a 284-amino-acid chain: RNase adapter protein RapZ (284 aa).

An ATP-binding site is contributed by 8 to 15 (GRSGSGKS). Residue 56-59 (DVRN) participates in GTP binding. Residues 266-284 (RSRGKNVQLRHRTLEKRKE) form an RNA-binding region.

The protein belongs to the RapZ-like family. RapZ subfamily. In terms of assembly, homotrimer.

Modulates the synthesis of GlmS, by affecting the processing and stability of the regulatory small RNA GlmZ. When glucosamine-6-phosphate (GlcN6P) concentrations are high in the cell, RapZ binds GlmZ and targets it to cleavage by RNase E. Consequently, GlmZ is inactivated and unable to activate GlmS synthesis. Under low GlcN6P concentrations, RapZ is sequestered and inactivated by an other regulatory small RNA, GlmY, preventing GlmZ degradation and leading to synthesis of GlmS. This is RNase adapter protein RapZ from Hamiltonella defensa subsp. Acyrthosiphon pisum (strain 5AT).